Consider the following 197-residue polypeptide: Cerebellin-3 (197 aa).

The first 24 residues, 1–24, serve as a signal peptide directing secretion; it reads MGTEWHKPKLSLALVLLTLEAGWA. A C1q domain is found at 59-197; the sequence is APPGRVAFAA…SFSGFLIFPL (139 aa). The tract at residues 64-197 is necessary for interaction with CBLN3, and homotrimerization; it reads VAFAAVRSHH…SFSGFLIFPL (134 aa). Asn82 carries an N-linked (GlcNAc...) asparagine glycan.

As to quaternary structure, heterohexamer; disulfide-linked heterotrimers. Interacts with CBLN1. May also form oligomers with CBLN2 and CBLN4. Expressed in brain, restricted to the cerebellar cortex. Within the cerebellum, expressed in granule layers (at protein level). Also detected in postsynaptic Purkinje cell spines (at protein level).

It is found in the endoplasmic reticulum. The protein resides in the golgi apparatus. It localises to the cis-Golgi network. The protein localises to the secreted. Its subcellular location is the synapse. Functionally, may be involved in synaptic functions in the CNS. The polypeptide is Cerebellin-3 (Cbln3) (Mus musculus (Mouse)).